The following is a 201-amino-acid chain: Ras-related protein Rab-1B (201 aa).

Residue Met-1 is modified to N-acetylmethionine. Ser-17, Gly-18, Val-19, Gly-20, Lys-21, Ser-22, Cys-23, Tyr-33, Thr-34, Glu-35, Ser-36, Ser-39, and Thr-40 together coordinate GTP. Position 22 (Ser-22) interacts with Mg(2+). The short motif at 30 to 45 (DDTYTESYISTIGVDF) is the Switch 1 element. Mg(2+) contacts are provided by Thr-40 and Asp-63. The tract at residues 64-83 (TAGQERFRTITSSYYRGAHG) is switch 2 region; required for interaction with REP1/CHM. Positions 65–80 (AGQERFRTITSSYYRG) match the Switch 2 motif. Residues Gly-66, Asn-121, Lys-122, Asp-124, Ser-151, Ala-152, and Lys-153 each contribute to the GTP site. Residues 174-201 (GPGAASGGERPNLKIDSTPVKPASGGCC) are disordered. 2 S-geranylgeranyl cysteine lipidation sites follow: Cys-200 and Cys-201. Position 201 is a cysteine methyl ester (Cys-201).

The protein belongs to the small GTPase superfamily. Rab family. In terms of assembly, interacts with MICAL1 and MICAL2. Interacts (GTP-bound form) with MICALCL, MICAL1 and MILCAL3. Interacts with GDI1; the interaction requires the GDP-bound state. Interacts with CHM/REP1; the interaction requires the GDP-bound form and is necessary for prenylation by GGTase II. Interacts with RabGAP TBC1D20. Interacts (in GDP-bound form) with lipid phosphatase MTMR6 (via GRAM domain); the interaction regulates MTMR6 recruitment to the endoplasmic reticulum-Golgi intermediate compartment. Interacts (in GDP-bound form) with lipid phosphatase MTMR7. It depends on Mg(2+) as a cofactor. Post-translationally, prenylated; by GGTase II, only after interaction of the substrate with Rab escort protein 1 (REP1).

It localises to the cytoplasm. Its subcellular location is the membrane. The protein localises to the preautophagosomal structure membrane. It is found in the perinuclear region. It catalyses the reaction GTP + H2O = GDP + phosphate + H(+). With respect to regulation, regulated by guanine nucleotide exchange factors (GEFs) which promote the exchange of bound GDP for free GTP. Regulated by GTPase activating proteins (GAPs) including TBC1D20 which increases the GTP hydrolysis activity. Inhibited by GDP dissociation inhibitors (GDIs). Functionally, the small GTPases Rab are key regulators of intracellular membrane trafficking, from the formation of transport vesicles to their fusion with membranes. Rabs cycle between an inactive GDP-bound form and an active GTP-bound form that is able to recruit to membranes different set of downstream effectors directly responsible for vesicle formation, movement, tethering and fusion. Plays a role in the initial events of the autophagic vacuole development which take place at specialized regions of the endoplasmic reticulum. Regulates vesicular transport between the endoplasmic reticulum and successive Golgi compartments. Required to modulate the compacted morphology of the Golgi. Promotes the recruitment of lipid phosphatase MTMR6 to the endoplasmic reticulum-Golgi intermediate compartment. The chain is Ras-related protein Rab-1B (Rab1b) from Mus musculus (Mouse).